Consider the following 274-residue polypeptide: Bis(5'-nucleosyl)-tetraphosphatase, symmetrical (274 aa).

It belongs to the Ap4A hydrolase family.

The enzyme catalyses P(1),P(4)-bis(5'-adenosyl) tetraphosphate + H2O = 2 ADP + 2 H(+). In terms of biological role, hydrolyzes diadenosine 5',5'''-P1,P4-tetraphosphate to yield ADP. This chain is Bis(5'-nucleosyl)-tetraphosphatase, symmetrical, found in Shewanella loihica (strain ATCC BAA-1088 / PV-4).